The chain runs to 60 residues: Antitoxin Dmd (60 aa).

As to quaternary structure, can form a complex with non-cognate host toxins LsoA and RnlA.

Antitoxin component of a potential type II toxin-antitoxin (TA) system. Acts as an antitoxin against host toxins RnlA and LsoA, preventing them from degrading T4 bacteriophage-derived mRNA and thus permitting successful virus infection. Stabilizes middle (8-10 minutes) and late (18 to 28 minutes) T4 gene transcripts. The chain is Antitoxin Dmd (dmd) from Escherichia coli (Bacteriophage T4).